The following is a 303-amino-acid chain: MRTDTDTWDIQTSVGSTALAVAAGRALARHPANGAPIDPYAELFCRAAGGQWSDLVQGKQSDHALSSEDFGRSFANFQAARTAFFDNFFTTTSDTGVRQVVLLASGLDCRAYRLQWPAETEVYELDQPLVQQFKQETLDAHGAAPSAVRHPISVDLRQDWSTILQESGFDPSRPSAWLVEGLLFFLKSSAQDLLLETIDSLAAPGSHIAVEQRDTYPDIEFEMRRAAAADSAEPGGSPLADFLALIYNESRSEAATWLRGRGWAAERIALLDYMNTSGFELPAYSSVGWDTLRYTNMVTAAKR.

S-adenosyl-L-methionine-binding positions include Asp-126 and 155–156 (DL).

It belongs to the UPF0677 family.

Its function is as follows. Exhibits S-adenosyl-L-methionine-dependent methyltransferase activity. The chain is Putative S-adenosyl-L-methionine-dependent methyltransferase MAB_0213c from Mycobacteroides abscessus (strain ATCC 19977 / DSM 44196 / CCUG 20993 / CIP 104536 / JCM 13569 / NCTC 13031 / TMC 1543 / L948) (Mycobacterium abscessus).